A 305-amino-acid chain; its full sequence is DNA-directed RNA polymerase 35 kDa subunit (305 aa).

The protein belongs to the poxviridae DNA-directed RNA polymerase 35 kDa subunit family. In terms of assembly, the DNA-dependent RNA polymerase used for intermediate and late genes expression consists of eight subunits 147 kDa, 133 kDa, 35 kDa, 30 kDa, 22 kDa, 19 kDa, 18 kDa and 7 kDa totalling more than 500 kDa in mass. The same holoenzyme, with the addition of the transcription-specificity factor RAP94, is used for early gene expression.

It is found in the virion. The enzyme catalyses RNA(n) + a ribonucleoside 5'-triphosphate = RNA(n+1) + diphosphate. Its function is as follows. Part of the DNA-dependent RNA polymerase which catalyzes the transcription of viral DNA into RNA using the four ribonucleoside triphosphates as substrates. Responsible for the transcription of early, intermediate and late genes. DNA-dependent RNA polymerase associates with the early transcription factor (ETF), itself composed of D6 and A7, thereby allowing the early genes transcription. Late transcription, and probably also intermediate transcription, require newly synthesized RNA polymerase. The sequence is that of DNA-directed RNA polymerase 35 kDa subunit (RPO35) from Homo sapiens (Human).